The primary structure comprises 807 residues: Serine/threonine-protein kinase AfsK (807 aa).

Residues 16-272 enclose the Protein kinase domain; it reads FEVLGRLGAG…QAQLAPHLFA (257 aa). Residues 22-30 and Lys-44 contribute to the ATP site; that span reads LGAGGMGLV. Ser-71 is subject to Phosphoserine; by autocatalysis. The active-site Proton acceptor is the Asp-138. Thr-168 carries the post-translational modification Phosphothreonine; by autocatalysis. 2 disordered regions span residues 292 to 328 and 353 to 429; these read MIER…HRLA and AGPS…PSPA. The span at 297–315 shows a compositional bias: basic residues; sequence RGGRRTARRPPRPRPRRLR. Residues 353–363 show a composition bias toward low complexity; sequence AGPSAAPDGGP.

It belongs to the protein kinase superfamily. Ser/Thr protein kinase family. In terms of assembly, interacts (via the N-terminal kinase domain) with KbpA; the interaction prevents autophosphorylation of AfsK. In terms of processing, autophosphorylated mainly on threonine residues. Some phosphorylation on serine residues. Autophosphorylation on Thr-168 is the major site enhancing kinase activity towards AfsR, and is regulated though interaction with KbpA.

It carries out the reaction L-seryl-[protein] + ATP = O-phospho-L-seryl-[protein] + ADP + H(+). It catalyses the reaction L-threonyl-[protein] + ATP = O-phospho-L-threonyl-[protein] + ADP + H(+). Functionally, component of the AfsK/AfsR system involved in the response of aerial mycelium formation to glucose. In Streptomyces griseus, this protein is Serine/threonine-protein kinase AfsK (afsK).